A 327-amino-acid chain; its full sequence is GTPase Obg (327 aa).

The Obg domain maps to 1-159 (MKFLDQVKIY…YVIWLQLKTI (159 aa)). Positions 160–327 (ADVGIVGLPN…IKAKLLSYVS (168 aa)) constitute an OBG-type G domain. Residues 166–173 (GLPNAGKS), 191–195 (FTTLN), 212–215 (DIPG), 279–282 (NKTD), and 308–310 (STL) each bind GTP. Residues S173 and T193 each contribute to the Mg(2+) site.

Belongs to the TRAFAC class OBG-HflX-like GTPase superfamily. OBG GTPase family. Monomer. It depends on Mg(2+) as a cofactor.

The protein resides in the cytoplasm. Functionally, an essential GTPase which binds GTP, GDP and possibly (p)ppGpp with moderate affinity, with high nucleotide exchange rates and a fairly low GTP hydrolysis rate. Plays a role in control of the cell cycle, stress response, ribosome biogenesis and in those bacteria that undergo differentiation, in morphogenesis control. This is GTPase Obg from Pelagibacter ubique (strain HTCC1062).